The following is a 483-amino-acid chain: SET domain and MYND-type zinc finger protein 6 (483 aa).

The 225-residue stretch at 4–228 folds into the SET domain; it reads PLIASVILPE…KDEQLFISYI (225 aa). Cys49, Cys52, Cys62, Cys65, Cys71, Cys75, His83, and Cys87 together coordinate Zn(2+). Residues 49 to 87 form an MYND-type zinc finger; that stretch reads CSTCTEEKVKTQRCAACKIIHYCSKGCQKADWPFHKLEC.

The protein belongs to the class V-like SAM-binding methyltransferase superfamily.

It localises to the cytoplasm. The protein localises to the nucleus. This Schizosaccharomyces pombe (strain 972 / ATCC 24843) (Fission yeast) protein is SET domain and MYND-type zinc finger protein 6 (set6).